The following is a 405-amino-acid chain: Probable tRNA sulfurtransferase (405 aa).

One can recognise a THUMP domain in the interval 60-165 (DKVMGRLKLV…LNGIFLSSET (106 aa)). ATP is bound by residues 183–184 (ML), 208–209 (HF), R265, G287, and Q296.

The protein belongs to the ThiI family.

It is found in the cytoplasm. It carries out the reaction [ThiI sulfur-carrier protein]-S-sulfanyl-L-cysteine + a uridine in tRNA + 2 reduced [2Fe-2S]-[ferredoxin] + ATP + H(+) = [ThiI sulfur-carrier protein]-L-cysteine + a 4-thiouridine in tRNA + 2 oxidized [2Fe-2S]-[ferredoxin] + AMP + diphosphate. The catalysed reaction is [ThiS sulfur-carrier protein]-C-terminal Gly-Gly-AMP + S-sulfanyl-L-cysteinyl-[cysteine desulfurase] + AH2 = [ThiS sulfur-carrier protein]-C-terminal-Gly-aminoethanethioate + L-cysteinyl-[cysteine desulfurase] + A + AMP + 2 H(+). The protein operates within cofactor biosynthesis; thiamine diphosphate biosynthesis. In terms of biological role, catalyzes the ATP-dependent transfer of a sulfur to tRNA to produce 4-thiouridine in position 8 of tRNAs, which functions as a near-UV photosensor. Also catalyzes the transfer of sulfur to the sulfur carrier protein ThiS, forming ThiS-thiocarboxylate. This is a step in the synthesis of thiazole, in the thiamine biosynthesis pathway. The sulfur is donated as persulfide by IscS. The polypeptide is Probable tRNA sulfurtransferase (Lactiplantibacillus plantarum (strain ATCC BAA-793 / NCIMB 8826 / WCFS1) (Lactobacillus plantarum)).